We begin with the raw amino-acid sequence, 223 residues long: 26S proteasome non-ATPase regulatory subunit 9 (223 aa).

Positions 103–121 are enriched in basic and acidic residues; sequence RDKEKQARDMAEAHKEAMS. Residues 103–141 form a disordered region; sequence RDKEKQARDMAEAHKEAMSRKLGQSESQGPPRAFAKVNS. The PDZ domain occupies 108-195; sequence QARDMAEAHK…KPLNVTVIRR (88 aa). Ser-129 bears the Phosphoserine mark.

Belongs to the proteasome subunit p27 family. In terms of assembly, interacts with PSMC3. Part of a transient complex (modulator) containing PSMD9, PSMC6 and PSMC3 formed during the assembly of the 26S proteasome. In terms of tissue distribution, expressed in all tissues tested, highly expressed in liver and kidney.

Functionally, acts as a chaperone during the assembly of the 26S proteasome, specifically of the base subcomplex of the PA700/19S regulatory complex (RC). During the base subcomplex assembly is part of an intermediate PSMD9:PSMC6:PSMC3 module, also known as modulator trimer complex; PSMD9 is released during the further base assembly process. In Homo sapiens (Human), this protein is 26S proteasome non-ATPase regulatory subunit 9 (PSMD9).